Here is a 121-residue protein sequence, read N- to C-terminus: Large ribosomal subunit protein uL14 (121 aa).

This sequence belongs to the universal ribosomal protein uL14 family. In terms of assembly, part of the 50S ribosomal subunit. Forms a cluster with proteins L3 and L19. In the 70S ribosome, L14 and L19 interact and together make contacts with the 16S rRNA in bridges B5 and B8.

Binds to 23S rRNA. Forms part of two intersubunit bridges in the 70S ribosome. The polypeptide is Large ribosomal subunit protein uL14 (Prochlorococcus marinus (strain MIT 9301)).